We begin with the raw amino-acid sequence, 224 residues long: Ribonuclease HII (224 aa).

The RNase H type-2 domain maps to Met1–Arg210. Positions 7, 8, and 105 each coordinate a divalent metal cation.

The protein belongs to the RNase HII family. The cofactor is Mn(2+). Requires Mg(2+) as cofactor.

It is found in the cytoplasm. It catalyses the reaction Endonucleolytic cleavage to 5'-phosphomonoester.. Its function is as follows. Endonuclease that specifically degrades the RNA of RNA-DNA hybrids. This chain is Ribonuclease HII (rnhB), found in Pyrococcus abyssi (strain GE5 / Orsay).